Consider the following 155-residue polypeptide: Regulatory protein RecX (155 aa).

This sequence belongs to the RecX family.

Its subcellular location is the cytoplasm. Functionally, modulates RecA activity. In Pseudomonas fluorescens (strain SBW25), this protein is Regulatory protein RecX.